The chain runs to 284 residues: D-tagatose-1,6-bisphosphate aldolase subunit GatY (284 aa).

D82 serves as the catalytic Proton donor. Residues H83 and H180 each coordinate Zn(2+). G181 is a binding site for dihydroxyacetone phosphate. Residue H208 participates in Zn(2+) binding. Residues 209 to 211 (GAS) and 230 to 233 (NVAT) contribute to the dihydroxyacetone phosphate site.

It belongs to the class II fructose-bisphosphate aldolase family. TagBP aldolase GatY subfamily. Forms a complex with GatZ. It depends on Zn(2+) as a cofactor.

It carries out the reaction D-tagatofuranose 1,6-bisphosphate = D-glyceraldehyde 3-phosphate + dihydroxyacetone phosphate. It participates in carbohydrate metabolism; D-tagatose 6-phosphate degradation; D-glyceraldehyde 3-phosphate and glycerone phosphate from D-tagatose 6-phosphate: step 2/2. Its function is as follows. Catalytic subunit of the tagatose-1,6-bisphosphate aldolase GatYZ, which catalyzes the reversible aldol condensation of dihydroxyacetone phosphate (DHAP or glycerone-phosphate) with glyceraldehyde 3-phosphate (G3P) to produce tagatose 1,6-bisphosphate (TBP). Requires GatZ subunit for full activity and stability. Is involved in the catabolism of galactitol. This is D-tagatose-1,6-bisphosphate aldolase subunit GatY from Shigella flexneri serotype 5b (strain 8401).